We begin with the raw amino-acid sequence, 263 residues long: Endonuclease 8 (263 aa).

Pro-2 functions as the Schiff-base intermediate with DNA in the catalytic mechanism. The active-site Proton donor is the Glu-3. The Proton donor; for beta-elimination activity role is filled by Lys-53. DNA-binding residues include Gln-70, Arg-125, and Asn-169. The FPG-type zinc-finger motif lies at Lys-229–His-263. Arg-253 functions as the Proton donor; for delta-elimination activity in the catalytic mechanism.

Belongs to the FPG family. It depends on Zn(2+) as a cofactor.

It carries out the reaction 2'-deoxyribonucleotide-(2'-deoxyribose 5'-phosphate)-2'-deoxyribonucleotide-DNA = a 3'-end 2'-deoxyribonucleotide-(2,3-dehydro-2,3-deoxyribose 5'-phosphate)-DNA + a 5'-end 5'-phospho-2'-deoxyribonucleoside-DNA + H(+). Involved in base excision repair of DNA damaged by oxidation or by mutagenic agents. Acts as a DNA glycosylase that recognizes and removes damaged bases. Has a preference for oxidized pyrimidines, such as thymine glycol, 5,6-dihydrouracil and 5,6-dihydrothymine. Has AP (apurinic/apyrimidinic) lyase activity and introduces nicks in the DNA strand. Cleaves the DNA backbone by beta-delta elimination to generate a single-strand break at the site of the removed base with both 3'- and 5'-phosphates. This chain is Endonuclease 8, found in Escherichia coli (strain SE11).